The chain runs to 1792 residues: D-lysergyl-peptide-synthetase subunit 3 (1792 aa).

The adenylation (A) domain stretch occupies residues 239–642 (FRQRCDLHPN…GRKDSQIKIR (404 aa)). The Carrier domain maps to 779–853 (SNEEHRLQRM…DLARKASQSV (75 aa)). Ser-813 is subject to O-(pantetheine 4'-phosphoryl)serine. The segment at 895–1285 (EDIYPCTPMQ…HILGQIHGKE (391 aa)) is condensation (C) domain. The reductase (R) domain stretch occupies residues 1415 to 1640 (VTGANGFIGT…AGEFNSSAGS (226 aa)).

The protein belongs to the NRP synthetase family.

It functions in the pathway alkaloid biosynthesis; ergot alkaloid biosynthesis. Functionally, D-lysergyl-peptide-synthetase subunit 3; part of the gene cluster that mediates the biosynthesis of fungal ergot alkaloid. DmaW catalyzes the first step of ergot alkaloid biosynthesis by condensing dimethylallyl diphosphate (DMAP) and tryptophan to form 4-dimethylallyl-L-tryptophan. The second step is catalyzed by the methyltransferase easF that methylates 4-dimethylallyl-L-tryptophan in the presence of S-adenosyl-L-methionine, resulting in the formation of 4-dimethylallyl-L-abrine. The catalase easC and the FAD-dependent oxidoreductase easE then transform 4-dimethylallyl-L-abrine to chanoclavine-I which is further oxidized by easD in the presence of NAD(+), resulting in the formation of chanoclavine-I aldehyde. Agroclavine dehydrogenase easG then mediates the conversion of chanoclavine-I aldehyde to agroclavine via a non-enzymatic adduct reaction: the substrate is an iminium intermediate that is formed spontaneously from chanoclavine-I aldehyde in the presence of glutathione. The presence of easA is not required to complete this reaction. Further conversion of agroclavine to paspalic acid is a two-step process involving oxidation of agroclavine to elymoclavine and of elymoclavine to paspalic acid, the second step being performed by the elymoclavine oxidase cloA. Paspalic acid is then further converted to D-lysergic acid. Ergopeptines are assembled from D-lysergic acid and three different amino acids by the D-lysergyl-peptide-synthetases composed each of a monomudular and a trimodular nonribosomal peptide synthetase subunit. LpsB and lpsC encode the monomodular subunits responsible for D-lysergic acid activation and incorporation into the ergopeptine backbone. LpsA1 and A2 subunits encode the trimodular nonribosomal peptide synthetase assembling the tripeptide portion of ergopeptines. LpsA1 is responsible for formation of the major ergopeptine, ergotamine, and lpsA2 for alpha-ergocryptine, the minor ergopeptine of the total alkaloid mixture elaborated by C.purpurea. D-lysergyl-tripeptides are assembled by the nonribosomal peptide synthetases and released as N-(D-lysergyl-aminoacyl)-lactams. Cyclolization of the D-lysergyl-tripeptides is performed by the Fe(2+)/2-ketoglutarate-dependent dioxygenase easH which introduces a hydroxyl group into N-(D-lysergyl-aminoacyl)-lactam at alpha-C of the aminoacyl residue followed by spontaneous condensation with the terminal lactam carbonyl group. This Claviceps purpurea (strain 20.1) (Ergot fungus) protein is D-lysergyl-peptide-synthetase subunit 3.